Reading from the N-terminus, the 363-residue chain is GDSL esterase/lipase At3g14220 (363 aa).

The first 28 residues, 1–28 (MAKNRNLVFFLGVLASFTLSSFPVTVSG), serve as a signal peptide directing secretion. Residue S39 is the Nucleophile of the active site. Residues D318 and H321 contribute to the active site.

Belongs to the 'GDSL' lipolytic enzyme family.

The protein localises to the secreted. The chain is GDSL esterase/lipase At3g14220 from Arabidopsis thaliana (Mouse-ear cress).